Here is a 1784-residue protein sequence, read N- to C-terminus: Sodium channel protein type 4 subunit alpha B (1784 aa).

The Cytoplasmic portion of the chain corresponds to 1 to 130 (MARLLPPTGT…RAAIRILIHS (130 aa)). Residues 29–48 (AEEAAEQERMKEQNVKVAEE) form a disordered region. The I repeat unit spans residues 112 to 429 (CLSPFNPVRR…VVAMAYAEQN (318 aa)). The chain crosses the membrane as a helical span at residues 131–149 (LFSLVIMLTILTNCVFMAM). Residues 150–156 (SDPPGWS) lie on the Extracellular side of the membrane. A helical transmembrane segment spans residues 157-177 (KILEYVFTGIYTFEAMVKVLS). Topologically, residues 178–191 (RGFCIGDFTFLRDP) are cytoplasmic. A helical membrane pass occupies residues 192–209 (WNWLDFMVISMAYLTEFV). Over 210–215 (DLGNIS) the chain is Extracellular. An N-linked (GlcNAc...) asparagine glycan is attached at Asn213. Residues 216-232 (ALRTFRVLRALKTITVI) traverse the membrane as a helical segment. Over 233–251 (PGLKTIVGALIQSVKKLAD) the chain is Cytoplasmic. The helical transmembrane segment at 252 to 271 (VMILTVFCLSVFALIGLQLF) threads the bilayer. Topologically, residues 272–366 (MGNLRQKCVL…PNYGYTSYDN (95 aa)) are extracellular. Cys279 and Cys335 form a disulfide bridge. Asn291, Asn304, and Asn337 each carry an N-linked (GlcNAc...) asparagine glycan. A disulfide bridge connects residues Cys344 and Cys350. Residues 367 to 391 (FGWAFLALFRLMTQDFWENLFQLTL) constitute an intramembrane region (pore-forming). The Extracellular segment spans residues 392–398 (RAAGKTY). Residues 399–419 (MIFFVVIIFLGSFYLINLILA) traverse the membrane as a helical segment. Residues 420–568 (VVAMAYAEQN…RIVYLFVMDP (149 aa)) lie on the Cytoplasmic side of the membrane. The interval 455-478 (EQKNGMVNGSKTSLSSKKKGDNDQ) is disordered. The II repeat unit spans residues 550–821 (CCIPWVKFKR…QIAISRITRG (272 aa)). A helical transmembrane segment spans residues 569 to 587 (FVDLGITLCIVLNTVFMAM). Residues 588–598 (EHYPMSVHVEE) are Extracellular-facing. Residues 599–618 (VLAIGNLVFTGIFAAEMVLK) form a helical membrane-spanning segment. The Cytoplasmic segment spans residues 619–632 (LIALDPYYYFQVGW). The helical transmembrane segment at 633 to 652 (NIFDSIIVTMSLVELMLADV) threads the bilayer. The Extracellular portion of the chain corresponds to 653-654 (EG). A helical transmembrane segment spans residues 655 to 672 (LSVLRSFRLMRVFKLAKS). Over 673–688 (WPTLNMLIKIIGNSVG) the chain is Cytoplasmic. A helical transmembrane segment spans residues 689–707 (ALGNLTLVLAIIVFIFAVV). Residues 708–736 (GMQLFGKSYTDSVCKISSDCELPRWHMAD) lie on the Extracellular side of the membrane. A disulfide bridge links Cys721 with Cys727. Positions 737–757 (FFHAFLIIFRVLCGEWIETMW) form an intramembrane region, pore-forming. The Extracellular segment spans residues 758 to 768 (DCMEVAGQGMC). Cysteines 759 and 768 form a disulfide. Residues 769-787 (IIVFMMVMVIGNLVVLNLF) traverse the membrane as a helical segment. Residues 788–973 (LALLLSSFSG…TCFAIVEHSY (186 aa)) are Cytoplasmic-facing. A disordered region spans residues 870–928 (PIANGESDDDDGNGSSEDEDDEGRDINMKKKNGDESSTCSTVDKPPEVEDLVEEEEEDL). The segment covering 875 to 892 (ESDDDDGNGSSEDEDDEG) has biased composition (acidic residues). Over residues 893 to 903 (RDINMKKKNGD) the composition is skewed to basic and acidic residues. A compositionally biased stretch (acidic residues) spans 917–928 (VEDLVEEEEEDL). An III repeat occupies 954 to 1269 (KGKAWWNFRK…KKYYNAMKKL (316 aa)). Residues 974-991 (FETFIIFMILLSSGALAF) traverse the membrane as a helical segment. Residues 992–1004 (EDIYIEQRRMIKI) are Extracellular-facing. Residues 1005-1023 (ILEYADQVFTYVFVVEMLL) form a helical membrane-spanning segment. Topologically, residues 1024–1037 (KWVAYGFKVYFTNA) are cytoplasmic. A helical membrane pass occupies residues 1038-1056 (WCWLDFLIVDVSLISLTAN). Over 1057–1064 (ILGYSELG) the chain is Extracellular. A helical transmembrane segment spans residues 1065 to 1083 (AIKSLRTLRALRPLRALSR). Over 1084-1101 (FEGMRVVVVNALVGAIPS) the chain is Cytoplasmic. Residues 1102 to 1121 (IFNVLLVCLIFWLIFSIMGV) form a helical membrane-spanning segment. Over 1122-1173 (NLFAGKFYYCFNETSEEVFDHNVVNNKTDCYELMEFHPEVRWMNGKINFDNV) the chain is Extracellular. Cysteines 1131 and 1151 form a disulfide. Residues Asn1133 and Asn1147 are each glycosylated (N-linked (GlcNAc...) asparagine). The segment at residues 1174 to 1195 (GMGYLALLQVATFKGWMDIMYS) is an intramembrane region (pore-forming). Topologically, residues 1196 to 1212 (AVDSRAIESQPVYEANL) are extracellular. A helical transmembrane segment spans residues 1213–1234 (YMYIYFVIFIIFGSFFTLNLFI). The Cytoplasmic portion of the chain corresponds to 1235 to 1297 (GVIIDNFNQQ…LVFDFVTQQF (63 aa)). An important for rapid channel inactivation region spans residues 1253 to 1255 (IFM). Residues 1278–1575 (IPRPTNCCQG…WEKFDPTASQ (298 aa)) form an IV repeat. A helical transmembrane segment spans residues 1298-1315 (FDIFIMVMICLNMVTMMV). At 1316-1326 (ETDDQSAEIEE) the chain is on the extracellular side. The helical transmembrane segment at 1327–1345 (ILFYINFAFIILFTGECVL) threads the bilayer. Residues 1346–1357 (KITALRYHYFSI) are Cytoplasmic-facing. The helical transmembrane segment at 1358–1375 (GWNIFDFVVVILSILGIG) threads the bilayer. The Extracellular segment spans residues 1376 to 1388 (LADLIEKYFVSPT). A helical transmembrane segment spans residues 1389 to 1405 (LFRVIRLARIGRVLRLI). The Cytoplasmic portion of the chain corresponds to 1406 to 1424 (RGAKGIRTLLFALMMSLPA). Residues 1425–1442 (LFNIGLLLFLIMFIFSIF) form a helical membrane-spanning segment. Over 1443–1464 (GMSNFAYVKKEVGIDDMMNFET) the chain is Extracellular. Residues 1465 to 1487 (FGNSIICMFMITTSAGWDGLLAP) constitute an intramembrane region (pore-forming). Over 1488–1516 (ILNSPPDCDPDVDNPGSTTRGNCGNAAVG) the chain is Extracellular. The cysteines at positions 1495 and 1510 are disulfide-linked. The helical transmembrane segment at 1517 to 1539 (IVFFCSYIVMSFLVVVNMYIAII) threads the bilayer. Over 1540-1784 (LENFNVATEE…AADNLRESIV (245 aa)) the chain is Cytoplasmic. Positions 1669-1698 (EEVAASTIQRAYRSHILKRCVKQASYMYRD) constitute an IQ domain.

It belongs to the sodium channel (TC 1.A.1.10) family. Nav1.4/SCN4A subfamily. Voltage-gated sodium (Nav) channels consist of an ion-conducting alpha subunit which is functional on its own associated with regulatory beta subunits. In terms of processing, lacks the cysteine which covalently binds the conotoxin GVIIJ. This cysteine (position 719) is speculated in other sodium channel subunits alpha to be implied in covalent binding with the sodium channel subunit beta-2 or beta-4. Expressed in skeletal muscle, heart, brain, spinal cord, and eye.

Its subcellular location is the cell membrane. The enzyme catalyses Na(+)(in) = Na(+)(out). In terms of biological role, pore-forming subunit of a voltage-gated sodium (Nav) channel that directly mediates the depolarizing phase of action potentials in excitable membranes. Navs, also called VGSCs (voltage-gated sodium channels) or VDSCs (voltage-dependent sodium channels), operate by switching between closed and open conformations depending on the voltage difference across the membrane. In the open conformation they allow Na(+) ions to selectively pass through the pore, along their electrochemical gradient. The influx of Na+ ions provokes membrane depolarization, initiating the propagation of electrical signals throughout cells and tissues. This is Sodium channel protein type 4 subunit alpha B (scn4ab) from Danio rerio (Zebrafish).